We begin with the raw amino-acid sequence, 59 residues long: uncharacterized protein (59 aa).

This is an uncharacterized protein from Acidianus hospitalis (AFV-1).